A 53-amino-acid polypeptide reads, in one-letter code: Antitoxin RelB3 (53 aa).

As to quaternary structure, forms heterodimers with RelE and possibly a heterotetramer RelE3-RelB3(2)-RelE3 from 2 heterodimers. The heterotetramer is probably not very stable in solution.

In terms of biological role, antitoxin component of a type II toxin-antitoxin (TA) system. Probably neutralizes the toxic activity of cognate toxin RelE. In Methanocaldococcus jannaschii (strain ATCC 43067 / DSM 2661 / JAL-1 / JCM 10045 / NBRC 100440) (Methanococcus jannaschii), this protein is Antitoxin RelB3 (relB3).